The following is a 448-amino-acid chain: Phosphoglucosamine mutase (448 aa).

The active-site Phosphoserine intermediate is S101. The Mg(2+) site is built by S101, D241, D243, and D245. S101 bears the Phosphoserine mark.

It belongs to the phosphohexose mutase family. It depends on Mg(2+) as a cofactor. Post-translationally, activated by phosphorylation.

The catalysed reaction is alpha-D-glucosamine 1-phosphate = D-glucosamine 6-phosphate. Its function is as follows. Catalyzes the conversion of glucosamine-6-phosphate to glucosamine-1-phosphate. The chain is Phosphoglucosamine mutase from Macrococcus caseolyticus (strain JCSC5402) (Macrococcoides caseolyticum).